Here is a 167-residue protein sequence, read N- to C-terminus: Phosphopantetheine adenylyltransferase (167 aa).

T9 is a binding site for substrate. ATP-binding positions include 9 to 10 and H17; that span reads TF. 3 residues coordinate substrate: K41, L73, and R87. Residues 88–90, E98, and 123–129 contribute to the ATP site; these read GLR and NSYISST.

Belongs to the bacterial CoaD family. As to quaternary structure, homohexamer. It depends on Mg(2+) as a cofactor.

Its subcellular location is the cytoplasm. The enzyme catalyses (R)-4'-phosphopantetheine + ATP + H(+) = 3'-dephospho-CoA + diphosphate. Its pathway is cofactor biosynthesis; coenzyme A biosynthesis; CoA from (R)-pantothenate: step 4/5. Its function is as follows. Reversibly transfers an adenylyl group from ATP to 4'-phosphopantetheine, yielding dephospho-CoA (dPCoA) and pyrophosphate. The polypeptide is Phosphopantetheine adenylyltransferase (Chromohalobacter salexigens (strain ATCC BAA-138 / DSM 3043 / CIP 106854 / NCIMB 13768 / 1H11)).